The primary structure comprises 137 residues: Holo-[acyl-carrier-protein] synthase (137 aa).

Positions 8 and 58 each coordinate Mg(2+).

It belongs to the P-Pant transferase superfamily. AcpS family. Requires Mg(2+) as cofactor.

The protein localises to the cytoplasm. It catalyses the reaction apo-[ACP] + CoA = holo-[ACP] + adenosine 3',5'-bisphosphate + H(+). In terms of biological role, transfers the 4'-phosphopantetheine moiety from coenzyme A to a Ser of acyl-carrier-protein. The polypeptide is Holo-[acyl-carrier-protein] synthase (Lactobacillus delbrueckii subsp. bulgaricus (strain ATCC BAA-365 / Lb-18)).